Here is a 137-residue protein sequence, read N- to C-terminus: Large-conductance mechanosensitive channel (137 aa).

Helical transmembrane passes span 10-30 (FAMRGNVVDLAVGVIIGAAFG) and 76-96 (GVFIQNVFDFVIVAFAIFMAI).

It belongs to the MscL family. Homopentamer.

The protein resides in the cell inner membrane. Its function is as follows. Channel that opens in response to stretch forces in the membrane lipid bilayer. May participate in the regulation of osmotic pressure changes within the cell. The sequence is that of Large-conductance mechanosensitive channel from Enterobacter sp. (strain 638).